A 478-amino-acid chain; its full sequence is Glucose-6-phosphate 1-dehydrogenase (478 aa).

NADP(+) contacts are provided by residues Arg-48, 86–87 (DF), and Lys-142. Substrate-binding residues include His-172, Lys-176, Glu-210, and Asp-229. Catalysis depends on His-234, which acts as the Proton acceptor. Substrate-binding residues include Lys-334 and Lys-339.

This sequence belongs to the glucose-6-phosphate dehydrogenase family.

The catalysed reaction is D-glucose 6-phosphate + NADP(+) = 6-phospho-D-glucono-1,5-lactone + NADPH + H(+). The protein operates within carbohydrate degradation; pentose phosphate pathway; D-ribulose 5-phosphate from D-glucose 6-phosphate (oxidative stage): step 1/3. Catalyzes the oxidation of glucose 6-phosphate to 6-phosphogluconolactone. The protein is Glucose-6-phosphate 1-dehydrogenase of Borreliella burgdorferi (strain ATCC 35210 / DSM 4680 / CIP 102532 / B31) (Borrelia burgdorferi).